A 321-amino-acid polypeptide reads, in one-letter code: tRNA U34 carboxymethyltransferase (321 aa).

Carboxy-S-adenosyl-L-methionine contacts are provided by residues Lys-90, Trp-104, Lys-109, Gly-129, 151–153, 180–181, Met-195, Tyr-199, and Arg-314; these read DPT and IE.

This sequence belongs to the class I-like SAM-binding methyltransferase superfamily. CmoB family. As to quaternary structure, homotetramer.

The enzyme catalyses carboxy-S-adenosyl-L-methionine + 5-hydroxyuridine(34) in tRNA = 5-carboxymethoxyuridine(34) in tRNA + S-adenosyl-L-homocysteine + H(+). Its function is as follows. Catalyzes carboxymethyl transfer from carboxy-S-adenosyl-L-methionine (Cx-SAM) to 5-hydroxyuridine (ho5U) to form 5-carboxymethoxyuridine (cmo5U) at position 34 in tRNAs. This is tRNA U34 carboxymethyltransferase from Actinobacillus succinogenes (strain ATCC 55618 / DSM 22257 / CCUG 43843 / 130Z).